A 108-amino-acid chain; its full sequence is MVLQRIFRLSSVLRSAVSVHLKRNIGVTAVAFNKELDPVQKLFVDKIREYKSKRQASGGPVDIGPEYQQDLDRELYKLKQMYGKGEMDTFPTFKFDDPKFEVIDKPQS.

A mitochondrion-targeting transit peptide spans 1–32 (MVLQRIFRLSSVLRSAVSVHLKRNIGVTAVAF). N6-acetyllysine is present on residues K41, K46, and K79. K84, K94, and K99 each carry N6-acetyllysine; alternate. N6-succinyllysine; alternate occurs at positions 84, 94, and 99. An N6-acetyllysine modification is found at K105. At S108 the chain carries Phosphoserine.

It belongs to the eukaryotic ATPase subunit F6 family. Component of the ATP synthase complex composed at least of ATP5F1A/subunit alpha, ATP5F1B/subunit beta, ATP5MC1/subunit c (homooctomer), MT-ATP6/subunit a, MT-ATP8/subunit 8, ATP5ME/subunit e, ATP5MF/subunit f, ATP5MG/subunit g, ATP5MK/subunit k, ATP5MJ/subunit j, ATP5F1C/subunit gamma, ATP5F1D/subunit delta, ATP5F1E/subunit epsilon, ATP5PF/subunit F6, ATP5PB/subunit b, ATP5PD/subunit d, ATP5PO/subunit OSCP. ATP synthase complex consists of a soluble F(1) head domain (subunits alpha(3) and beta(3)) - the catalytic core - and a membrane F(0) domain - the membrane proton channel (subunits c, a, 8, e, f, g, k and j). These two domains are linked by a central stalk (subunits gamma, delta, and epsilon) rotating inside the F1 region and a stationary peripheral stalk (subunits F6, b, d, and OSCP).

It localises to the mitochondrion. Its subcellular location is the mitochondrion inner membrane. Its function is as follows. Subunit F6, of the mitochondrial membrane ATP synthase complex (F(1)F(0) ATP synthase or Complex V) that produces ATP from ADP in the presence of a proton gradient across the membrane which is generated by electron transport complexes of the respiratory chain. ATP synthase complex consist of a soluble F(1) head domain - the catalytic core - and a membrane F(1) domain - the membrane proton channel. These two domains are linked by a central stalk rotating inside the F(1) region and a stationary peripheral stalk. During catalysis, ATP synthesis in the catalytic domain of F(1) is coupled via a rotary mechanism of the central stalk subunits to proton translocation. In vivo, can only synthesize ATP although its ATP hydrolase activity can be activated artificially in vitro. Part of the complex F(0) domain. Part of the complex F(0) domain and the peripheric stalk, which acts as a stator to hold the catalytic alpha(3)beta(3) subcomplex and subunit a/ATP6 static relative to the rotary elements. The polypeptide is ATP synthase peripheral stalk subunit F6, mitochondrial (Mus musculus (Mouse)).